A 461-amino-acid polypeptide reads, in one-letter code: pre-mRNA splicing regulator USH1G (461 aa).

ANK repeat units follow at residues 31 to 60, 64 to 93, and 97 to 126; these read DGMTPTLWAAYHGNLESLRLIVSRGGDPDK, WGNTPLHLAASNGHLHCLSFLVSFGANIWC, and DYHTPLDMAAMKGHMECVRYLDSIAAKQSS. Disordered stretches follow at residues 208–243 and 332–368; these read GTARGKTKMQKKLERRKQGGEGTFKVSEDGRKSARS and EDGGLDGVGAPRGRLQSSPSLDDDSLGSANSLQDRSC. The span at 210 to 222 shows a compositional bias: basic residues; that stretch reads ARGKTKMQKKLER. Residues 385-447 enclose the SAM domain; that stretch reads LEPETSPLET…KILGAVRRRR (63 aa). Ser422 is modified (phosphoserine; by CK2).

As to quaternary structure, part of a complex composed of USH1C, USH1G and MYO7A. Interacts with USH1C (via the first PDZ domain). Interacts with PDZD7. Interacts with CDH23 and PCDH15; these interactions may recruit USH1G to the plasma membrane. Interacts with intraflagellar transport proteins IFT20, IFT52 and IFT57. Interacts with splicing factors SF3B1, PRPF6, PRPF31 and SON. Interacts with the U4/U6.U5 tri-small nuclear ribonucleoprotein (tri-snRNP) complex in the presence of pre-mRNAs. Interacts (via SAM domain) with MAGI2 (via PDZ 6 domain); the interaction is triggered by phosphorylation of USH1G by CK2 and negatively regulates MAGI2-mediated endocytosis. As to expression, expressed in vestibule of the inner ear, eye and small intestine.

The protein localises to the cytoplasm. It is found in the cytosol. Its subcellular location is the cytoskeleton. It localises to the cell membrane. The protein resides in the cell projection. The protein localises to the cilium. It is found in the nucleus speckle. Its subcellular location is the nucleus. It localises to the cajal body. The protein resides in the microtubule organizing center. The protein localises to the centrosome. It is found in the photoreceptor inner segment. In terms of biological role, plays a role in pre-mRNA splicing by regulating the release and transfer of U4/U6.U5 tri-small nuclear ribonucleoprotein (tri-snRNP) complexes from their assembly site in Cajal bodies to nuclear speckles, thereby contributing to the assembly of the pre-catalytic spliceosome on target pre-mRNAs. May also participate in recycling of snRNPs back to Cajal bodies during splicing. Plays a role in regulating MAGI2-mediated endocytosis. Anchoring/scaffolding protein that is a part of the functional network formed by USH1C, USH1G, CDH23 and MYO7A that mediates mechanotransduction in cochlear hair cells. Required for normal development and maintenance of cochlear hair cell bundles. Required for normal hearing. This chain is pre-mRNA splicing regulator USH1G (USH1G), found in Homo sapiens (Human).